A 143-amino-acid polypeptide reads, in one-letter code: uncharacterized protein (143 aa).

An N-terminal signal peptide occupies residues 1–27 (MSDEIARLVADVFELAGLLRRSGEVVA).

This is an uncharacterized protein from Mycobacterium tuberculosis (strain CDC 1551 / Oshkosh).